Consider the following 122-residue polypeptide: Large ribosomal subunit protein uL14 (122 aa).

The protein belongs to the universal ribosomal protein uL14 family. As to quaternary structure, part of the 50S ribosomal subunit. Forms a cluster with proteins L3 and L19. In the 70S ribosome, L14 and L19 interact and together make contacts with the 16S rRNA in bridges B5 and B8.

In terms of biological role, binds to 23S rRNA. Forms part of two intersubunit bridges in the 70S ribosome. The chain is Large ribosomal subunit protein uL14 from Shewanella baltica (strain OS223).